We begin with the raw amino-acid sequence, 128 residues long: Large ribosomal subunit protein bL17 (128 aa).

The protein belongs to the bacterial ribosomal protein bL17 family. Part of the 50S ribosomal subunit. Contacts protein L32.

The sequence is that of Large ribosomal subunit protein bL17 from Klebsiella pneumoniae (strain 342).